The primary structure comprises 287 residues: Polyamine aminopropyltransferase (287 aa).

The region spanning 9-242 (GSWLDEYQND…GIWSWTFASI (234 aa)) is the PABS domain. Gln36 contributes to the S-methyl-5'-thioadenosine binding site. Spermidine is bound by residues His67 and Asp91. S-methyl-5'-thioadenosine is bound by residues Glu111 and 143–144 (NG). Residue Asp162 is the Proton acceptor of the active site. Pro169 provides a ligand contact to S-methyl-5'-thioadenosine.

This sequence belongs to the spermidine/spermine synthase family. Homodimer or homotetramer.

The protein resides in the cytoplasm. The enzyme catalyses S-adenosyl 3-(methylsulfanyl)propylamine + putrescine = S-methyl-5'-thioadenosine + spermidine + H(+). Its pathway is amine and polyamine biosynthesis; spermidine biosynthesis; spermidine from putrescine: step 1/1. Functionally, catalyzes the irreversible transfer of a propylamine group from the amino donor S-adenosylmethioninamine (decarboxy-AdoMet) to putrescine (1,4-diaminobutane) to yield spermidine. The protein is Polyamine aminopropyltransferase of Prochlorococcus marinus (strain SARG / CCMP1375 / SS120).